The following is a 358-amino-acid chain: Spermatogenesis-associated protein 22 (358 aa).

Polar residues-rich tracts occupy residues 1 to 12 (MKRNLNESSARS), 30 to 51 (QPLT…DSYG), 81 to 121 (PASA…TSLR), and 150 to 159 (QQQKQFQTPE). Disordered regions lie at residues 1–51 (MKRN…DSYG), 81–122 (PASA…SLRT), and 150–172 (QQQK…AEVP).

As to quaternary structure, component of a multiprotein complex with MEIOB and RPA2. Interacts with MEIOB. Interacts with the complex BRME1:HSF2BP:BRCA2. As to expression, specifically expressed in gonadal germ cells, when male and female germ cells progress through prophase of meiosis I.

The protein resides in the chromosome. Functionally, meiosis-specific protein required for homologous recombination in meiosis I. The sequence is that of Spermatogenesis-associated protein 22 from Mus musculus (Mouse).